A 422-amino-acid polypeptide reads, in one-letter code: Methylaspartate ammonia-lyase (422 aa).

Residue Gln175 participates in (2S,3S)-3-methyl-L-aspartate binding. Mg(2+)-binding residues include Asp239, Glu276, and Asp310. Gln332 is a binding site for (2S,3S)-3-methyl-L-aspartate. Lys334 (proton acceptor) is an active-site residue. 363 to 364 (TC) contributes to the (2S,3S)-3-methyl-L-aspartate binding site.

The protein belongs to the methylaspartate ammonia-lyase family. As to quaternary structure, homodimer. It depends on Mg(2+) as a cofactor.

The enzyme catalyses (2S,3S)-3-methyl-L-aspartate = mesaconate + NH4(+). It functions in the pathway amino-acid degradation; L-glutamate degradation via mesaconate pathway; acetate and pyruvate from L-glutamate: step 2/4. Functionally, involved in the methylaspartate cycle. Catalyzes the formation of the alpha,beta-unsaturated bond by the reversible anti elimination of ammonia from L-threo-beta-methylaspartate (L-threo-(2S,3S)-3-methylaspartate) to give mesaconate. The chain is Methylaspartate ammonia-lyase (mal) from Haloarcula marismortui (strain ATCC 43049 / DSM 3752 / JCM 8966 / VKM B-1809) (Halobacterium marismortui).